Consider the following 153-residue polypeptide: Ribosome maturation factor RimP (153 aa).

Belongs to the RimP family.

Its subcellular location is the cytoplasm. Required for maturation of 30S ribosomal subunits. This Chromohalobacter salexigens (strain ATCC BAA-138 / DSM 3043 / CIP 106854 / NCIMB 13768 / 1H11) protein is Ribosome maturation factor RimP.